A 61-amino-acid chain; its full sequence is Large ribosomal subunit protein bL28 (61 aa).

Positions 1-27 (MAKDFVTGKKTTFGNTRSHALNSSSRS) are disordered. A compositionally biased stretch (polar residues) spans 9-27 (KKTTFGNTRSHALNSSSRS).

The protein belongs to the bacterial ribosomal protein bL28 family.

The polypeptide is Large ribosomal subunit protein bL28 (Lactobacillus delbrueckii subsp. bulgaricus (strain ATCC 11842 / DSM 20081 / BCRC 10696 / JCM 1002 / NBRC 13953 / NCIMB 11778 / NCTC 12712 / WDCM 00102 / Lb 14)).